The chain runs to 448 residues: Serine--tRNA ligase (448 aa).

255 to 257 is a binding site for L-serine; that stretch reads TSE. 286 to 288 contributes to the ATP binding site; it reads RSE. E309 serves as a coordination point for L-serine. Position 373 to 376 (373 to 376) interacts with ATP; sequence EISS. S408 is a binding site for L-serine.

The protein belongs to the class-II aminoacyl-tRNA synthetase family. Type-1 seryl-tRNA synthetase subfamily. Homodimer. The tRNA molecule binds across the dimer.

It is found in the cytoplasm. It carries out the reaction tRNA(Ser) + L-serine + ATP = L-seryl-tRNA(Ser) + AMP + diphosphate + H(+). The enzyme catalyses tRNA(Sec) + L-serine + ATP = L-seryl-tRNA(Sec) + AMP + diphosphate + H(+). It participates in aminoacyl-tRNA biosynthesis; selenocysteinyl-tRNA(Sec) biosynthesis; L-seryl-tRNA(Sec) from L-serine and tRNA(Sec): step 1/1. Its function is as follows. Catalyzes the attachment of serine to tRNA(Ser). Is also able to aminoacylate tRNA(Sec) with serine, to form the misacylated tRNA L-seryl-tRNA(Sec), which will be further converted into selenocysteinyl-tRNA(Sec). In Bordetella petrii (strain ATCC BAA-461 / DSM 12804 / CCUG 43448), this protein is Serine--tRNA ligase.